Here is a 150-residue protein sequence, read N- to C-terminus: Galectin-1 (150 aa).

Residues 9–141 (NQIKLQDDFK…FSSPVTVDIH (133 aa)) form the Galectin domain. 4 residues coordinate a carbohydrate: histidine 51, arginine 55, asparagine 64, and glutamate 75.

In terms of assembly, homotetramer. Oligomerization is required for carbohydrate binding. As to expression, most abundant in fruiting bodies. Very low levels of expression in asexual vegetative mycelia.

It localises to the secreted. The protein resides in the extracellular space. The protein localises to the extracellular matrix. It is found in the cell wall. Its subcellular location is the endomembrane system. Binds lactose. May play a role in fruiting body formation. The polypeptide is Galectin-1 (Cgl1) (Coprinopsis cinerea (strain Okayama-7 / 130 / ATCC MYA-4618 / FGSC 9003) (Inky cap fungus)).